The following is a 773-amino-acid chain: Tyrosine kinase receptor Cad96Ca (773 aa).

An N-terminal signal peptide occupies residues 1–48 (MVYHHHNHESRIIHCRKQLTSWRRRSLLLTIIVVTATVVSLISQEAEA). Residues 49-315 (HNQNAPPILY…ITIFSLKSGT (267 aa)) are Extracellular-facing. Positions 58 to 172 (YVRERNWRIS…ENSSGYRPQT (115 aa)) constitute a Cadherin domain. N-linked (GlcNAc...) asparagine glycosylation is found at Asn-126, Asn-164, and Asn-180. The segment at 196–302 (SIRNGLPNSR…TPSGGHHNNS (107 aa)) is disordered. Positions 209-235 (WYPPVPQNNIFGPPPFGNNYPPPPPNI) are enriched in pro residues. The segment covering 243 to 253 (SGEEEQPDEEV) has biased composition (acidic residues). Composition is skewed to polar residues over residues 254–283 (TPTT…STRV) and 290–302 (ETTT…HNNS). Residues Asn-278, Asn-279, Asn-300, and Asn-301 are each glycosylated (N-linked (GlcNAc...) asparagine). The chain crosses the membrane as a helical span at residues 316–336 (IPIVVTVGGFFVAIAVLLAYL). The Cytoplasmic segment spans residues 337–773 (CRRRLCAISR…NIVSLSGEKL (437 aa)). 2 disordered regions span residues 352–373 (KEKE…LTDD) and 411–447 (TGVT…AGSS). Residues 361–373 (SNQSQLSSTLTDD) show a composition bias toward polar residues. The span at 411 to 433 (TGVTNGGVSSPGVPSPGTGEPGS) shows a compositional bias: low complexity. Positions 470–749 (LKFFNILGEG…MLDKLLHTEM (280 aa)) constitute a Protein kinase domain. ATP is bound by residues 476–484 (LGEGAFGQV) and Lys-504. The active-site Proton acceptor is Asp-610.

The protein belongs to the protein kinase superfamily. Tyr protein kinase family. Fibroblast growth factor receptor subfamily.

It localises to the membrane. The catalysed reaction is L-tyrosyl-[protein] + ATP = O-phospho-L-tyrosyl-[protein] + ADP + H(+). In Drosophila melanogaster (Fruit fly), this protein is Tyrosine kinase receptor Cad96Ca (Cad96Ca).